The chain runs to 658 residues: Threonine--tRNA ligase (658 aa).

A TGS domain is found at 1-64 (MSCSISLSFP…GQSGQVEIIT (64 aa)). Residues 246–549 (DHRRLGREMD…LIENFAGHMP (304 aa)) form a catalytic region. Zn(2+)-binding residues include Cys343, His394, and His526.

It belongs to the class-II aminoacyl-tRNA synthetase family. In terms of assembly, homodimer. Zn(2+) serves as cofactor.

The protein localises to the cytoplasm. The catalysed reaction is tRNA(Thr) + L-threonine + ATP = L-threonyl-tRNA(Thr) + AMP + diphosphate + H(+). Functionally, catalyzes the attachment of threonine to tRNA(Thr) in a two-step reaction: L-threonine is first activated by ATP to form Thr-AMP and then transferred to the acceptor end of tRNA(Thr). Also edits incorrectly charged L-seryl-tRNA(Thr). The chain is Threonine--tRNA ligase from Bartonella tribocorum (strain CIP 105476 / IBS 506).